A 199-amino-acid chain; its full sequence is Phosphoserine phosphatase RsbX (199 aa).

The PPM-type phosphatase domain maps to 11–198; that stretch reads QTLVYQLNKE…DDLTYILGQL (188 aa).

It carries out the reaction O-phospho-L-serine + H2O = L-serine + phosphate. The enzyme catalyses O-phospho-D-serine + H2O = D-serine + phosphate. Functionally, negative regulator of sigma-B activity. Dephosphorylates RsbS. Plays a role both in maintaining low sigma-B activity during growth and in reestablishing prestress sigma-B activity after induction. Could have a negative feedback role by indirectly communicating sigma-B protein levels. In Bacillus subtilis (strain 168), this protein is Phosphoserine phosphatase RsbX (rsbX).